Consider the following 346-residue polypeptide: Hydroxyproline O-galactosyltransferase HPGT3 (346 aa).

Over residues M1–S10 the composition is skewed to polar residues. A disordered region spans residues M1 to F21. Over M1–P28 the chain is Cytoplasmic. The helical; Signal-anchor for type II membrane protein transmembrane segment at S29 to G45 threads the bilayer. The Lumenal portion of the chain corresponds to R46 to A346.

The protein belongs to the glycosyltransferase 31 family. Mn(2+) serves as cofactor. In terms of tissue distribution, expressed in roots, rosette leaves, cauline leaves, stems, flowers and siliques.

The protein resides in the golgi apparatus membrane. The protein operates within protein modification; protein glycosylation. Functionally, possesses hydroxyproline O-galactosyltransferase activity. Transfers galactose from UDP-galactose to hydroxyproline residues in the arabinogalactan proteins (AGPs). Is specific for AGPs containing non-contiguous peptidyl hydroxyproline residues. The addition of galactose onto the peptidyl hydroxyproline residues in AGP core proteins represents the first committed step in arabinogalactan polysaccharide addition. AGP glycans play essential roles in both vegetative and reproductive plant growth. The polypeptide is Hydroxyproline O-galactosyltransferase HPGT3 (Arabidopsis thaliana (Mouse-ear cress)).